Reading from the N-terminus, the 876-residue chain is Valine--tRNA ligase (876 aa).

The 'HIGH' region motif lies at 43–53 (PNVTGVLHMGH). The short motif at 532–536 (KMSKS) is the 'KMSKS' region element. Lys-535 contacts ATP. Coiled coils occupy residues 805–826 (GNMIDVDAEIARMEAELKHKEG) and 853–875 (RKKQADAESIIQSLKESIASLKN).

The protein belongs to the class-I aminoacyl-tRNA synthetase family. ValS type 1 subfamily. Monomer.

The protein resides in the cytoplasm. The enzyme catalyses tRNA(Val) + L-valine + ATP = L-valyl-tRNA(Val) + AMP + diphosphate. Its function is as follows. Catalyzes the attachment of valine to tRNA(Val). As ValRS can inadvertently accommodate and process structurally similar amino acids such as threonine, to avoid such errors, it has a 'posttransfer' editing activity that hydrolyzes mischarged Thr-tRNA(Val) in a tRNA-dependent manner. The sequence is that of Valine--tRNA ligase from Bacteroides fragilis (strain ATCC 25285 / DSM 2151 / CCUG 4856 / JCM 11019 / LMG 10263 / NCTC 9343 / Onslow / VPI 2553 / EN-2).